The following is a 372-amino-acid chain: Putative RING-H2 finger protein ATL21A (372 aa).

An N-terminal signal peptide occupies residues 1–20 (MTFSKQLFLYLFFLFPLLHA). The helical transmembrane segment at 242 to 262 (IILLSIIGPLTIFATCIAVGV) threads the bilayer. Residues 320–362 (CPICLSEYASKETVRCIPECDHCFHSECIDVWLKIHGSCPLCR) form an RING-type; atypical zinc finger.

It belongs to the RING-type zinc finger family. ATL subfamily.

Its subcellular location is the membrane. It catalyses the reaction S-ubiquitinyl-[E2 ubiquitin-conjugating enzyme]-L-cysteine + [acceptor protein]-L-lysine = [E2 ubiquitin-conjugating enzyme]-L-cysteine + N(6)-ubiquitinyl-[acceptor protein]-L-lysine.. Its pathway is protein modification; protein ubiquitination. The sequence is that of Putative RING-H2 finger protein ATL21A (ATL21A) from Arabidopsis thaliana (Mouse-ear cress).